Reading from the N-terminus, the 869-residue chain is Valine--tRNA ligase (869 aa).

The short motif at 47 to 57 is the 'HIGH' region element; the sequence is PYPTGNFHIGN. The short motif at 521–525 is the 'KMSKS' region element; the sequence is KMSKS. Residue Lys524 coordinates ATP.

This sequence belongs to the class-I aminoacyl-tRNA synthetase family. ValS type 2 subfamily.

Its subcellular location is the cytoplasm. It catalyses the reaction tRNA(Val) + L-valine + ATP = L-valyl-tRNA(Val) + AMP + diphosphate. In terms of biological role, catalyzes the attachment of valine to tRNA(Val). As ValRS can inadvertently accommodate and process structurally similar amino acids such as threonine, to avoid such errors, it has a 'posttransfer' editing activity that hydrolyzes mischarged Thr-tRNA(Val) in a tRNA-dependent manner. The polypeptide is Valine--tRNA ligase (Methanosarcina barkeri (strain Fusaro / DSM 804)).